Reading from the N-terminus, the 235-residue chain is Protein CIST1 (235 aa).

A signal peptide spans 1 to 31 (MASSQPPLPPPPPPLLLLALLLLLKVSDTSS). 2 stretches are compositionally biased toward low complexity: residues 28-61 (DTSS…SSPT) and 76-110 (STSH…SQPE). The interval 28–159 (DTSSSVSTAT…TGPPSVSLAT (132 aa)) is disordered. Residues 32 to 184 (SVSTATSTAS…GVPRLHRNPG (153 aa)) lie on the Extracellular side of the membrane. The N-linked (GlcNAc...) asparagine glycan is linked to Asn45. The segment covering 114–136 (HPSSGSPSSEHTVTSPSLGSVSL) has biased composition (polar residues). The chain crosses the membrane as a helical span at residues 185-205 (VVVAVCLLVSALLIGGAIMAV). At 206–235 (RRCHNGVSEFQKLDEGLVSRRSSSAHHTLP) the chain is on the cytoplasmic side.

As to expression, highly expressed in large intestine, small intestine, rumen, and kidney tissues.

The protein resides in the membrane. The polypeptide is Protein CIST1 (CIST1) (Bos taurus (Bovine)).